Consider the following 380-residue polypeptide: Lipoyl synthase, mitochondrial (380 aa).

Positions 104, 109, 115, 135, 139, 142, and 350 each coordinate [4Fe-4S] cluster. The Radical SAM core domain occupies 120–339 (EHGTQTATIM…ETRGNELGFL (220 aa)).

The protein belongs to the radical SAM superfamily. Lipoyl synthase family. Requires [4Fe-4S] cluster as cofactor.

It localises to the mitochondrion. The catalysed reaction is [[Fe-S] cluster scaffold protein carrying a second [4Fe-4S](2+) cluster] + N(6)-octanoyl-L-lysyl-[protein] + 2 oxidized [2Fe-2S]-[ferredoxin] + 2 S-adenosyl-L-methionine + 4 H(+) = [[Fe-S] cluster scaffold protein] + N(6)-[(R)-dihydrolipoyl]-L-lysyl-[protein] + 4 Fe(3+) + 2 hydrogen sulfide + 2 5'-deoxyadenosine + 2 L-methionine + 2 reduced [2Fe-2S]-[ferredoxin]. It participates in protein modification; protein lipoylation via endogenous pathway; protein N(6)-(lipoyl)lysine from octanoyl-[acyl-carrier-protein]: step 2/2. Its function is as follows. Catalyzes the radical-mediated insertion of two sulfur atoms into the C-6 and C-8 positions of the octanoyl moiety bound to the lipoyl domains of lipoate-dependent enzymes, thereby converting the octanoylated domains into lipoylated derivatives. The polypeptide is Lipoyl synthase, mitochondrial (Culex quinquefasciatus (Southern house mosquito)).